The primary structure comprises 999 residues: Sarcoplasmic/endoplasmic reticulum calcium ATPase 3 (999 aa).

Position 1 is an N-acetylmethionine (Met-1). The Cytoplasmic segment spans residues Met-1–Ser-48. Ser-17 bears the Phosphoserine mark. Thr-19 is modified (phosphothreonine). Residues Leu-49–Ala-69 traverse the membrane as a helical segment. The Lumenal segment spans residues Leu-70–Val-89. The chain crosses the membrane as a helical span at residues Glu-90–Arg-110. At Asn-111 to Leu-253 the chain is on the cytoplasmic side. Residues Asp-254–Val-273 traverse the membrane as a helical segment. Residues Ile-274–Tyr-295 lie on the Lumenal side of the membrane. Residues Phe-296 to Ala-313 form a helical membrane-spanning segment. Ca(2+)-binding residues include Val-304, Ala-305, Ile-307, and Glu-309. The Cytoplasmic portion of the chain corresponds to Val-314–Met-757. The active-site 4-aspartylphosphate intermediate is Asp-351. Residues Asp-351 and Thr-353 each coordinate Mg(2+). Residue Thr-353 participates in ATP binding. The interval Ala-370–Gln-400 is interaction with phospholamban 1. Thr-415 bears the Phosphothreonine mark. Glu-442, Arg-489, Lys-515, Arg-560, Thr-625, Gly-626, and Asp-627 together coordinate ATP. Ser-662 bears the Phosphoserine mark. The ATP site is built by Arg-678 and Lys-684. Asp-703 serves as a coordination point for Mg(2+). Position 706 (Asn-706) interacts with ATP. A helical transmembrane segment spans residues Lys-758 to Leu-777. Ca(2+) contacts are provided by Asn-768 and Glu-771. At Thr-778–Leu-787 the chain is on the lumenal side. A helical membrane pass occupies residues Ile-788–Gly-808. An interaction with phospholamban 2 region spans residues Ile-788–Gly-808. The Ca(2+) site is built by Asn-796, Thr-799, and Asp-800. Residues Phe-809–Leu-828 lie on the Cytoplasmic side of the membrane. Residues Ile-829–Ala-851 traverse the membrane as a helical segment. The Lumenal segment spans residues Ala-852–Thr-897. A helical membrane pass occupies residues Thr-898 to Ser-917. Glu-908 contributes to the Ca(2+) binding site. Over Glu-918–Asn-930 the chain is Cytoplasmic. Residues Pro-931–Leu-949 form a helical membrane-spanning segment. The Lumenal segment spans residues Val-950 to Gly-964. Residues Arg-965–Lys-985 form a helical membrane-spanning segment. Topologically, residues Tyr-986–Lys-999 are cytoplasmic.

The protein belongs to the cation transport ATPase (P-type) (TC 3.A.3) family. Type IIA subfamily. As to quaternary structure, interacts with sarcolipin (SLN). Interacts with phospholamban (PLN). Interacts with myoregulin (MRLN). Interacts with DWORF. Interacts with VMP1. Interacts with TUNAR; the interaction occurs at low levels in low glucose conditions and is increased by high glucose levels. Mg(2+) serves as cofactor. As to expression, found in most tissues. Most abundant in large and small intestine, spleen and lung. Also detected in PC12 cells.

It localises to the endoplasmic reticulum membrane. Its subcellular location is the sarcoplasmic reticulum membrane. It catalyses the reaction Ca(2+)(in) + ATP + H2O = Ca(2+)(out) + ADP + phosphate + H(+). Inhibited by sarcolipin (SLN), phospholamban (PLN) and myoregulin (MRLN). Enhanced by DWORF; DWORF increases activity by displacing sarcolipin (SLN), phospholamban (PLN) and myoregulin (MRLN). Its function is as follows. This magnesium-dependent enzyme catalyzes the hydrolysis of ATP coupled with the transport of the calcium. Transports calcium ions from the cytosol into the sarcoplasmic/endoplasmic reticulum lumen. Contributes to calcium sequestration involved in muscular excitation/contraction. Functionally, this magnesium-dependent enzyme catalyzes the hydrolysis of ATP coupled with the transport of calcium. Transports calcium ions from the cytosol into the sarcoplasmic/endoplasmic reticulum lumen. Contributes to calcium sequestration involved in muscular excitation/contraction. The sequence is that of Sarcoplasmic/endoplasmic reticulum calcium ATPase 3 (Atp2a3) from Rattus norvegicus (Rat).